Here is a 314-residue protein sequence, read N- to C-terminus: Cytochrome bo(3) ubiquinol oxidase subunit 2 (314 aa).

The N-terminal stretch at methionine 1–glycine 23 is a signal peptide. The N-palmitoyl cysteine moiety is linked to residue cysteine 24. A lipid anchor (S-diacylglycerol cysteine) is attached at cysteine 24. Over cysteine 24–leucine 42 the chain is Periplasmic. Residues isoleucine 43 to valine 63 form a helical membrane-spanning segment. Residues phenylalanine 64 to lysine 86 lie on the Cytoplasmic side of the membrane. Residues isoleucine 87–tyrosine 107 traverse the membrane as a helical segment. Topologically, residues histidine 108–glutamate 314 are periplasmic. Residues tyrosine 278 to serine 293 show a composition bias toward basic and acidic residues. Residues tyrosine 278–glutamate 314 form a disordered region.

Belongs to the cytochrome c oxidase subunit 2 family. As to quaternary structure, heterooctamer of two A chains, two B chains, two C chains and two D chains.

It localises to the cell inner membrane. Functionally, cytochrome bo(3) ubiquinol terminal oxidase is the component of the aerobic respiratory chain of E.coli that predominates when cells are grown at high aeration. Has proton pump activity across the membrane in addition to electron transfer, pumping 2 protons/electron. The sequence is that of Cytochrome bo(3) ubiquinol oxidase subunit 2 (cyoA) from Pseudomonas putida (Arthrobacter siderocapsulatus).